The primary structure comprises 1070 residues: DNA-directed RNA polymerase subunit beta (1070 aa).

This sequence belongs to the RNA polymerase beta chain family. In plastids the minimal PEP RNA polymerase catalytic core is composed of four subunits: alpha, beta, beta', and beta''. When a (nuclear-encoded) sigma factor is associated with the core the holoenzyme is formed, which can initiate transcription.

It is found in the plastid. It catalyses the reaction RNA(n) + a ribonucleoside 5'-triphosphate = RNA(n+1) + diphosphate. In terms of biological role, DNA-dependent RNA polymerase catalyzes the transcription of DNA into RNA using the four ribonucleoside triphosphates as substrates. This is DNA-directed RNA polymerase subunit beta (rpoB) from Cuscuta reflexa (Southern Asian dodder).